A 431-amino-acid chain; its full sequence is Magnetosome protein MamH (431 aa).

Helical transmembrane passes span 21–41, 57–77, 86–106, 107–127, 156–176, 178–198, 243–263, 274–294, 302–321, 358–378, and 380–400; these read LLSA…PLFL, ANVQ…LGYL, IIVA…LSPW, IGGA…IMSA, TAFM…QIPA, AGIA…AWLA, MVFV…LIKV, ILIG…RSFI, AVLL…GFII, LLGS…IFFV, and VGGF…TGVG.

Belongs to the major facilitator superfamily.

Its subcellular location is the magnetosome membrane. Its function is as follows. Required for correct biomineralization of the magnetosome; probably transports some form of iron. Partially functionally redundant with MamZ. This is Magnetosome protein MamH (mamH) from Paramagnetospirillum magneticum (strain ATCC 700264 / AMB-1) (Magnetospirillum magneticum).